The primary structure comprises 168 residues: Photosystem I assembly protein Ycf3 (168 aa).

TPR repeat units lie at residues 35 to 68 (AFTY…EIDP), 72 to 105 (SYIL…NPFL), and 120 to 153 (GEQA…TPGN).

The protein belongs to the Ycf3 family.

It is found in the plastid. Its subcellular location is the chloroplast thylakoid membrane. Its function is as follows. Essential for the assembly of the photosystem I (PSI) complex. May act as a chaperone-like factor to guide the assembly of the PSI subunits. The chain is Photosystem I assembly protein Ycf3 from Gossypium barbadense (Sea Island cotton).